The sequence spans 399 residues: Bombesin receptor subtype-3 (399 aa).

The Extracellular segment spans residues 1–41; the sequence is MSQRQPQSPNQTLISITNDTETSSSAVSNDTTPKGWTGDNS. N10, N18, and N29 each carry an N-linked (GlcNAc...) asparagine glycan. A helical membrane pass occupies residues 42 to 63; it reads PGIEALCAIYITYAVIISVGIL. The Cytoplasmic portion of the chain corresponds to 64-82; sequence GNAILIKVFFKTKSMQTVP. Residues 83–103 traverse the membrane as a helical segment; the sequence is NIFITSLAFGDLLLLLTCVPV. Residues 104–121 are Extracellular-facing; it reads DATHYLAEGWLFGKVGCK. An intrachain disulfide couples C120 to C203. Residues 122-143 form a helical membrane-spanning segment; it reads VLSFIRLTSVGVSVFTLTILSA. Topologically, residues 144–163 are cytoplasmic; sequence DRYKAVVKPLERQPSNAILK. Residues 164 to 184 traverse the membrane as a helical segment; it reads TCAKAGGIWIMAMIFALPEAI. Over 185 to 220 the chain is Extracellular; that stretch reads FSNVYTFQDPNRNVTFESCNSYPISERLLQEIHSLL. Residues 221 to 241 form a helical membrane-spanning segment; that stretch reads CFLVFYIIPLSIISVYYSLIA. Residues 242–272 are Cytoplasmic-facing; the sequence is RTLYKSTLNIPTEEQSHARKQIESRKRIAKT. The helical transmembrane segment at 273–293 threads the bilayer; it reads VLVLVALFALCWLPNHLLYLY. Over 294–313 the chain is Extracellular; sequence HSFTYESYAEPSDVPFVVTI. Residues 314–333 traverse the membrane as a helical segment; that stretch reads FSRVLAFSNSCVNPFALYWL. Residues 334–399 lie on the Cytoplasmic side of the membrane; the sequence is SKTFQKHFKA…STAKKGEDKV (66 aa). The S-palmitoyl cysteine moiety is linked to residue C347.

The protein belongs to the G-protein coupled receptor 1 family. In terms of assembly, interacts with C6orf89.

The protein resides in the cell membrane. In terms of biological role, role in sperm cell division, maturation, or function. This receptor mediates its action by association with G proteins that activate a phosphatidylinositol-calcium second messenger system. This is Bombesin receptor subtype-3 (Brs3) from Rattus norvegicus (Rat).